The following is a 231-amino-acid chain: MRIAVIGAMEEEVRILRDKLEQAETETVAGCEFTKGLLAGHEVILLKSGIGKVNAAMSTTILLEKYKPEKVINTGSAGGFHHSLNVGDVVISTEVRHHDVDVTAFNYEYGQVPGMPPGFKADEALVALAEKCMQAEENIQVVKGMIATGDSFMSDPNRVAAIRDKFENLYAVEMEAAAVAQVCHQYEIPFVIIRALSDIAGKESNVSFDQFLDQAALHSTNFIVKVLEELK.

The active-site Proton acceptor is glutamate 12. Residues glycine 78, methionine 153, and 174 to 175 (ME) contribute to the substrate site. Aspartate 198 (proton donor) is an active-site residue.

This sequence belongs to the PNP/UDP phosphorylase family. MtnN subfamily.

The enzyme catalyses S-adenosyl-L-homocysteine + H2O = S-(5-deoxy-D-ribos-5-yl)-L-homocysteine + adenine. It catalyses the reaction S-methyl-5'-thioadenosine + H2O = 5-(methylsulfanyl)-D-ribose + adenine. The catalysed reaction is 5'-deoxyadenosine + H2O = 5-deoxy-D-ribose + adenine. It functions in the pathway amino-acid biosynthesis; L-methionine biosynthesis via salvage pathway; S-methyl-5-thio-alpha-D-ribose 1-phosphate from S-methyl-5'-thioadenosine (hydrolase route): step 1/2. Functionally, catalyzes the irreversible cleavage of the glycosidic bond in both 5'-methylthioadenosine (MTA) and S-adenosylhomocysteine (SAH/AdoHcy) to adenine and the corresponding thioribose, 5'-methylthioribose and S-ribosylhomocysteine, respectively. Also cleaves 5'-deoxyadenosine, a toxic by-product of radical S-adenosylmethionine (SAM) enzymes, into 5-deoxyribose and adenine. The sequence is that of 5'-methylthioadenosine/S-adenosylhomocysteine nucleosidase from Bacillus cereus (strain B4264).